Here is a 542-residue protein sequence, read N- to C-terminus: Chaperonin GroEL 5 (542 aa).

ATP contacts are provided by residues T30–P33, K51, D87–T91, G415, and D496.

The protein belongs to the chaperonin (HSP60) family. Forms a cylinder of 14 subunits composed of two heptameric rings stacked back-to-back. Interacts with the co-chaperonin GroES.

It is found in the cytoplasm. It catalyses the reaction ATP + H2O + a folded polypeptide = ADP + phosphate + an unfolded polypeptide.. In terms of biological role, together with its co-chaperonin GroES, plays an essential role in assisting protein folding. The GroEL-GroES system forms a nano-cage that allows encapsulation of the non-native substrate proteins and provides a physical environment optimized to promote and accelerate protein folding. The protein is Chaperonin GroEL 5 of Rhizobium meliloti (strain 1021) (Ensifer meliloti).